The primary structure comprises 233 residues: Orotidine 5'-phosphate decarboxylase (233 aa).

Substrate contacts are provided by residues Asp-12, Lys-34, 61-70, Thr-120, Arg-181, Gln-190, Gly-210, and Arg-211; that span reads DLKFHDIPNT. Lys-63 functions as the Proton donor in the catalytic mechanism.

This sequence belongs to the OMP decarboxylase family. Type 1 subfamily. Homodimer.

It carries out the reaction orotidine 5'-phosphate + H(+) = UMP + CO2. It participates in pyrimidine metabolism; UMP biosynthesis via de novo pathway; UMP from orotate: step 2/2. In terms of biological role, catalyzes the decarboxylation of orotidine 5'-monophosphate (OMP) to uridine 5'-monophosphate (UMP). The protein is Orotidine 5'-phosphate decarboxylase of Hahella chejuensis (strain KCTC 2396).